The sequence spans 193 residues: Ion-translocating oxidoreductase complex subunit A (193 aa).

The next 6 membrane-spanning stretches (helical) occupy residues 5–25 (LLLF…FLGL), 39–59 (MGMG…AWLI), 63–83 (ILIP…VIAV), 102–122 (LLGI…VALL), 134–154 (ALYG…FAAI), and 171–191 (AIAL…SGLV).

It belongs to the NqrDE/RnfAE family. The complex is composed of six subunits: RsxA, RsxB, RsxC, RsxD, RsxE and RsxG.

It localises to the cell inner membrane. In terms of biological role, part of a membrane-bound complex that couples electron transfer with translocation of ions across the membrane. Required to maintain the reduced state of SoxR. This Escherichia fergusonii (strain ATCC 35469 / DSM 13698 / CCUG 18766 / IAM 14443 / JCM 21226 / LMG 7866 / NBRC 102419 / NCTC 12128 / CDC 0568-73) protein is Ion-translocating oxidoreductase complex subunit A.